The primary structure comprises 288 residues: MQIVEKAPAKINLGLDTLFEHPNGDKEWDMVMTSVDLADYVMLESLHTNRIEVVTDSGFLPNDRRNLAFQAVSVLKRYCHVDRGVRIKIRKAIPVAAGLGGGSSDAAAVLRGLNRMWNLHLDLATLARLGLQVDSDVPYCVYSQTAHVTGKGDVVTPLPKLPPMWIILAKPKVSVSTPNILRQVNYERIDQHPNIEALLAGIQQQDFAEIFANMGNVLEPITAKRYPEILQIKRQLLTFGADAAQMSGTGPTVFGVCRKQSRAQRVYNSLKGFCREVYLVRPVNLNEH.

Residue K10 is part of the active site. 94-104 (PVAAGLGGGSS) lines the ATP pocket. The active site involves D136.

Belongs to the GHMP kinase family. IspE subfamily.

The enzyme catalyses 4-CDP-2-C-methyl-D-erythritol + ATP = 4-CDP-2-C-methyl-D-erythritol 2-phosphate + ADP + H(+). The protein operates within isoprenoid biosynthesis; isopentenyl diphosphate biosynthesis via DXP pathway; isopentenyl diphosphate from 1-deoxy-D-xylulose 5-phosphate: step 3/6. Catalyzes the phosphorylation of the position 2 hydroxy group of 4-diphosphocytidyl-2C-methyl-D-erythritol. In Lactiplantibacillus plantarum (strain ATCC BAA-793 / NCIMB 8826 / WCFS1) (Lactobacillus plantarum), this protein is 4-diphosphocytidyl-2-C-methyl-D-erythritol kinase.